The following is a 720-amino-acid chain: NADH-ubiquinone oxidoreductase 78 kDa subunit, mitochondrial (720 aa).

A mitochondrion-targeting transit peptide spans 1–23 (MNSIKSHILRSSKRYISASSKRL). The 2Fe-2S ferredoxin-type domain occupies 24-102 (AEVEVTVDGR…GMVVHTDSER (79 aa)). [2Fe-2S] cluster contacts are provided by C58, C69, C72, and C86. Positions 102–141 (RIKKAREGVTEMLLENHPLDCPVCDQGGECDLQEQSQRYG) constitute a 4Fe-4S His(Cys)3-ligated-type domain. The 4Fe-4S Mo/W bis-MGD-type domain occupies 241–297 (LKRTETIDVLDAVGSNIRVDTRGIEVMRVLPRLNDDVNEEWISDKTRFACDGLKTQR).

It belongs to the complex I 75 kDa subunit family. In terms of assembly, core subunit of respiratory chain NADH dehydrogenase (Complex I) which is composed of 45 different subunits. This is the largest subunit of complex I and it is a component of the iron-sulfur (IP) fragment of the enzyme. It depends on [2Fe-2S] cluster as a cofactor. Requires [4Fe-4S] cluster as cofactor.

The protein resides in the mitochondrion. The enzyme catalyses a ubiquinone + NADH + 5 H(+)(in) = a ubiquinol + NAD(+) + 4 H(+)(out). In terms of biological role, core subunit of the mitochondrial membrane respiratory chain NADH dehydrogenase (Complex I) which catalyzes electron transfer from NADH through the respiratory chain, using ubiquinone as an electron acceptor. Essential for catalysing the entry and efficient transfer of electrons within complex I. Plays a key role in the assembly and stability of complex I and participates in the association of complex I with ubiquinol-cytochrome reductase complex (Complex III) to form supercomplexes. Plays a role in cell wall integrity and is involved in osmotic and oxidative resistance, yeast to hypha transition, and the ability to damage and invade oral epithelial cells. This chain is NADH-ubiquinone oxidoreductase 78 kDa subunit, mitochondrial, found in Candida albicans (strain SC5314 / ATCC MYA-2876) (Yeast).